The following is a 758-amino-acid chain: MLTIKRLLLNQNLFKSSCNSTGIISINYNSNNKICFFSSSSTLINKTNEILDIEDNNNNNNEISSSPLFLKETIKEFKLKKEFIEKYSKKKAPFGFGVLGEIVYRRSYSRVKEDNTNEQWFETVERVVNGTYNIQRKWIERHGLEWNQNKAQKSAQEMYNRIFEMKFLPPGRGLYSCGSSTTESKGLFAALNNCAFVSTLDIKKNPSKPFIFLMDASMLGVGVGFDTKGENSIIIKGQLPPPPPQQQPQQQQQQHGQNNNIFIVPDSREGWVESVQLLLDSYFLKRNNPIFDYSSIRKKGEPIKGFGGVCCGYEPLKELHDEIRALLNKCIGKPISSTNIVDLMNLIGKCVVSGNVRQAAEIAFGDPNSQEYIDLKNYQINPQRASFGWCSNNSVFAELGMDYSKVCQSILHNGEPGLAWLDNMKAYSRMVPTELDYKDRRAMGGNPCLEQTLESYELCCLVETFPNNHESLEDYLKTLKYAFLYAKTVTLGSTQWPDTNKVLLRNRRIGCSMSGIAQFIHFNGLHQLKDWCVNGFKLLNELDEKYSEWLAIPKSIKRTSIKPSGTVSLLAGATPGMHYPISEYYIRRIRIQKESNLIPPLVEAGYHVEPAFENSTNVVVEIPIHSGKGIRSANSITMWEQLSLASFLQKYWADNQVSCTVSFDPIKEGPQLKHALDYFQYQLKGVSFLPNSSTTTSVYKQMPYEEIDETRYNQIIANLKPVDFQKLNNSPLEPTPDKFCDSSSCTIVSDNSETLNNL.

Cys194 and Cys459 are joined by a disulfide. Residues 233–256 (IIIKGQLPPPPPQQQPQQQQQQHG) form a disordered region. Active-site residues include Cys448 and Glu450.

It belongs to the class II ribonucleoside-triphosphate reductase family. As to quaternary structure, monomer. The cofactor is adenosylcob(III)alamin.

The enzyme catalyses a 2'-deoxyribonucleoside 5'-triphosphate + [thioredoxin]-disulfide + H2O = a ribonucleoside 5'-triphosphate + [thioredoxin]-dithiol. In Dictyostelium discoideum (Social amoeba), this protein is Probable adenosylcobalamin-dependent ribonucleoside-triphosphate reductase (rtpR).